A 272-amino-acid chain; its full sequence is NAD kinase (272 aa).

Asp50 (proton acceptor) is an active-site residue. Residues 50–51 (DG), 126–127 (NE), Arg152, Asp154, 165–170 (TAYNKS), and Ala189 each bind NAD(+).

This sequence belongs to the NAD kinase family. The cofactor is a divalent metal cation.

The protein resides in the cytoplasm. It catalyses the reaction NAD(+) + ATP = ADP + NADP(+) + H(+). Its function is as follows. Involved in the regulation of the intracellular balance of NAD and NADP, and is a key enzyme in the biosynthesis of NADP. Catalyzes specifically the phosphorylation on 2'-hydroxyl of the adenosine moiety of NAD to yield NADP. The chain is NAD kinase from Streptococcus pneumoniae (strain Hungary19A-6).